A 287-amino-acid polypeptide reads, in one-letter code: MRFIHALLLAGIAHSAYASEKLTFKTDLEKLEREKAAQIGVAIVDPQGEIVAGHRMAQRFAMCSTFKFPLAALVFERIDSGTERGDRKLSYGPDMIVEWSPATERFLASGHMTVLEAAQAAVQLSDNGATNLLLREIGGPAAMTQYFRKIGDSVSRLDRKEPEMNDNTPGDLRDTTTPIAMARTVAKVLYGGALTSTSTHTIERWLIGNQTGDATLRAGFPKDWVVGEKTGTCANGGRNDIGFFKAQERDYAVAVYTTAPKLSAVERDELVASVGQVITQLILSTDK.

The N-terminal stretch at 1–18 is a signal peptide; that stretch reads MRFIHALLLAGIAHSAYA. C63 and C233 are oxidised to a cystine. S64 acts as the Nucleophile; acyl-ester intermediate in catalysis. 3 residues coordinate a beta-lactam: K67, S125, and E161.

It belongs to the class-A beta-lactamase family.

The catalysed reaction is a beta-lactam + H2O = a substituted beta-amino acid. Its activity is regulated as follows. Inhibited by the beta-lactamase-blocking agents clavulanic acid, sulbactam and tazobactam. Extended-spectrum beta-lactamase (ESBL) which confers resistance to penicillins, as well as first, third and fourth-generation cephalosporins. Has modest carbapenem-hydrolyzing activity. Has cefotaxime-hydrolyzing activity. The protein is Beta-lactamase GES-2 of Pseudomonas aeruginosa.